Reading from the N-terminus, the 223-residue chain is Thiopurine S-methyltransferase (223 aa).

S-adenosyl-L-methionine is bound by residues W10, L45, E66, and R127.

It belongs to the class I-like SAM-binding methyltransferase superfamily. TPMT family.

The protein localises to the cytoplasm. The catalysed reaction is S-adenosyl-L-methionine + a thiopurine = S-adenosyl-L-homocysteine + a thiopurine S-methylether.. This chain is Thiopurine S-methyltransferase, found in Shewanella woodyi (strain ATCC 51908 / MS32).